A 448-amino-acid chain; its full sequence is uncharacterized protein (448 aa).

Residues 428–440 (PFKTDCDPNNDND) show a composition bias toward polar residues. The segment at 428 to 448 (PFKTDCDPNNDNDLTPPAVFG) is disordered.

This is an uncharacterized protein from Mycoplasma pneumoniae (strain ATCC 29342 / M129 / Subtype 1) (Mycoplasmoides pneumoniae).